Consider the following 533-residue polypeptide: Flavin-containing monooxygenase 5 (533 aa).

Arginine 5 is subject to Dimethylated arginine. Residues 10–14 (GAGAS), glutamate 33, and 41–42 (LW) contribute to the FAD site. Serine 54 carries the phosphoserine modification. A Phosphotyrosine modification is found at tyrosine 56. Serine 58 carries the phosphoserine modification. 62-63 (NT) serves as a coordination point for FAD. An NADP(+)-binding site is contributed by 196–199 (SGGD). The residue at position 280 (serine 280) is a Phosphoserine. Threonine 284 is subject to Phosphothreonine. Serine 401 carries the post-translational modification Phosphoserine. Residues 513 to 533 (LVTVRVLMLAVAFFAVILAYF) traverse the membrane as a helical segment.

The protein belongs to the FMO family. FAD is required as a cofactor. In terms of tissue distribution, expressed in liver (at protein level). Expressed in the mucosal epithelium of the gastrointestinal tract.

Its subcellular location is the microsome membrane. It localises to the endoplasmic reticulum membrane. It carries out the reaction N,N-dimethylaniline + NADPH + O2 + H(+) = N,N-dimethylaniline N-oxide + NADP(+) + H2O. The enzyme catalyses NADPH + O2 + H(+) = H2O2 + NADP(+). It catalyses the reaction heptan-2-one + NADPH + O2 + H(+) = pentyl acetate + NADP(+) + H2O. The catalysed reaction is octan-3-one + NADPH + O2 + H(+) = pentyl propanoate + NADP(+) + H2O. It carries out the reaction octan-3-one + NADPH + O2 + H(+) = ethyl hexanoate + NADP(+) + H2O. The enzyme catalyses hexan-3-one + NADPH + O2 + H(+) = ethyl butanoate + NADP(+) + H2O. It catalyses the reaction hexan-3-one + NADPH + O2 + H(+) = propyl propanoate + NADP(+) + H2O. The catalysed reaction is heptan-4-one + NADPH + O2 + H(+) = propyl butanoate + NADP(+) + H2O. It carries out the reaction (2E)-geranial + NADPH + O2 + H(+) = (1E)-2,6-dimethylhepta-1,5-dien-1-yl formate + NADP(+) + H2O. The enzyme catalyses sulcatone + NADPH + O2 + H(+) = 4-methylpent-3-en-1-yl acetate + NADP(+) + H2O. Its function is as follows. Acts as a Baeyer-Villiger monooxygenase on a broad range of substrates. Catalyzes the insertion of an oxygen atom into a carbon-carbon bond adjacent to a carbonyl, which converts ketones to esters. Active on diverse carbonyl compounds, whereas soft nucleophiles are mostly non- or poorly reactive. In contrast with other forms of FMO it is non- or poorly active on 'classical' substrates such as drugs, pesticides, and dietary components containing soft nucleophilic heteroatoms. Able to oxidize drug molecules bearing a carbonyl group on an aliphatic chain, such as nabumetone and pentoxifylline. Also, in the absence of substrates, shows slow but yet significant NADPH oxidase activity. Acts as a positive modulator of cholesterol biosynthesis as well as glucose homeostasis, promoting metabolic aging via pleiotropic effects. In Mus musculus (Mouse), this protein is Flavin-containing monooxygenase 5.